The sequence spans 429 residues: Enolase (429 aa).

Residue glutamine 164 coordinates (2R)-2-phosphoglycerate. Glutamate 206 (proton donor) is an active-site residue. Aspartate 243, glutamate 286, and aspartate 313 together coordinate Mg(2+). 4 residues coordinate (2R)-2-phosphoglycerate: lysine 338, arginine 367, serine 368, and lysine 389. Lysine 338 serves as the catalytic Proton acceptor.

It belongs to the enolase family. Mg(2+) is required as a cofactor.

The protein resides in the cytoplasm. It is found in the secreted. It localises to the cell surface. The catalysed reaction is (2R)-2-phosphoglycerate = phosphoenolpyruvate + H2O. Its pathway is carbohydrate degradation; glycolysis; pyruvate from D-glyceraldehyde 3-phosphate: step 4/5. Catalyzes the reversible conversion of 2-phosphoglycerate (2-PG) into phosphoenolpyruvate (PEP). It is essential for the degradation of carbohydrates via glycolysis. This chain is Enolase, found in Thermosipho africanus (strain TCF52B).